Reading from the N-terminus, the 993-residue chain is Chromosome transmission fidelity protein 18 homolog (993 aa).

The disordered stretch occupies residues 26-72 (PDEFNAYDGPSTSKQAAEKQKENRAPVAALRDSTRLGNSTLGSPQLS). Residues 60–72 (RLGNSTLGSPQLS) show a composition bias toward polar residues. 427-434 (GPPGLGKT) is an ATP binding site. The disordered stretch occupies residues 892 to 913 (AAPKGGAPSAPAAKKKTSGAAA). Residues 894–913 (PKGGAPSAPAAKKKTSGAAA) show a composition bias toward low complexity.

This sequence belongs to the activator 1 small subunits family. CTF18 subfamily. In terms of assembly, component of the CTF18-RFC complex.

It is found in the nucleus. Its function is as follows. Chromosome cohesion factor involved in sister chromatid cohesion and fidelity of chromosome transmission. Component of one of the cell nuclear antigen loader complexes, CTF18-replication factor C (CTF18-RFC). The CTF18-RFC complex catalyzes the ATP-dependent loading of PCNA onto primed and gapped DNA and has weak ATPase activity. The CTF18-RFC complex catalyzes the ATP-dependent loading of PCNA onto primed and gapped DNA. The polypeptide is Chromosome transmission fidelity protein 18 homolog (Drosophila melanogaster (Fruit fly)).